Here is a 162-residue protein sequence, read N- to C-terminus: Phosphopantetheine adenylyltransferase (162 aa).

Serine 11 is a binding site for substrate. ATP contacts are provided by residues 11 to 12 (SF) and histidine 19. Lysine 43, valine 76, and arginine 90 together coordinate substrate. ATP contacts are provided by residues 91-93 (GLR), glutamate 101, and 126-132 (HLYISSS).

This sequence belongs to the bacterial CoaD family. As to quaternary structure, homohexamer. Mg(2+) serves as cofactor.

It is found in the cytoplasm. The enzyme catalyses (R)-4'-phosphopantetheine + ATP + H(+) = 3'-dephospho-CoA + diphosphate. It participates in cofactor biosynthesis; coenzyme A biosynthesis; CoA from (R)-pantothenate: step 4/5. Is inhibited by a series of cycloalkyl pyrimidines, which also show suppression of bacterial growth. Functionally, reversibly transfers an adenylyl group from ATP to 4'-phosphopantetheine, yielding dephospho-CoA (dPCoA) and pyrophosphate. The sequence is that of Phosphopantetheine adenylyltransferase from Streptococcus pneumoniae (strain ATCC BAA-255 / R6).